Consider the following 254-residue polypeptide: Anamorsin homolog (254 aa).

The segment at 4–132 (VQENNHVLYI…EIGSAAKLSL (129 aa)) is N-terminal SAM-like domain. Residues 132 to 167 (LGGNKAKVAAVWKLDVDDDDDERIDEDELLDEEDKV) are linker. Residues Cys177, Cys186, Cys189, and Cys191 each contribute to the [2Fe-2S] cluster site. Residues 177-191 (CGTTGKRKACKDCSC) form a fe-S binding site A region. Positions 215, 218, 226, and 229 each coordinate [4Fe-4S] cluster. 2 consecutive short sequence motifs (cx2C motif) follow at residues 215–218 (CGSC) and 226–229 (CATC). The fe-S binding site B stretch occupies residues 215–229 (CGSCYLGDAFRCATC).

It belongs to the anamorsin family. As to quaternary structure, monomer. [2Fe-2S] cluster serves as cofactor. It depends on [4Fe-4S] cluster as a cofactor.

The protein resides in the cytoplasm. It is found in the mitochondrion intermembrane space. Functionally, component of the cytosolic iron-sulfur (Fe-S) protein assembly (CIA) machinery. Required for the maturation of extramitochondrial Fe-S proteins. Part of an electron transfer chain functioning in an early step of cytosolic Fe-S biogenesis, facilitating the de novo assembly of a [4Fe-4S] cluster on the cytosolic Fe-S scaffold complex. Electrons are transferred from NADPH via a FAD- and FMN-containing diflavin oxidoreductase. Together with the diflavin oxidoreductase, also required for the assembly of the diferric tyrosyl radical cofactor of ribonucleotide reductase (RNR), probably by providing electrons for reduction during radical cofactor maturation in the catalytic small subunit. The sequence is that of Anamorsin homolog from Aedes aegypti (Yellowfever mosquito).